The following is a 317-amino-acid chain: Transaldolase 2 (317 aa).

K132 acts as the Schiff-base intermediate with substrate in catalysis.

This sequence belongs to the transaldolase family. Type 1 subfamily. Homodimer.

The protein resides in the cytoplasm. It catalyses the reaction D-sedoheptulose 7-phosphate + D-glyceraldehyde 3-phosphate = D-erythrose 4-phosphate + beta-D-fructose 6-phosphate. Its pathway is carbohydrate degradation; pentose phosphate pathway; D-glyceraldehyde 3-phosphate and beta-D-fructose 6-phosphate from D-ribose 5-phosphate and D-xylulose 5-phosphate (non-oxidative stage): step 2/3. Functionally, transaldolase is important for the balance of metabolites in the pentose-phosphate pathway. The sequence is that of Transaldolase 2 from Pectobacterium atrosepticum (strain SCRI 1043 / ATCC BAA-672) (Erwinia carotovora subsp. atroseptica).